The chain runs to 500 residues: Signal transduction histidine-protein kinase/phosphatase UhpB (500 aa).

The next 8 membrane-spanning stretches (helical) occupy residues 8–28 (LITVVACFFIFSAAWFCLWSI), 78–98 (VALAHLPLLMIGSVLTLLPVA), 112–132 (LLLQGAALTAAALLQSLPWLG), 140–160 (ALLLTLTGGLTLAPICLVFWH), 185–205 (HLIWYLLLFIVSLWLQLGLPA), 207–224 (LSRFTPFCLALPIIALAW), 231–249 (ALIATLMNAIALIASQTWH), and 253–273 (VDLLLSLLAQSLTGLLLGAGI). Residues 274-500 (QRLRELNQSL…VSVSLPQRYV (227 aa)) are Cytoplasmic-facing. Positions 311-499 (ELHDDIGQTI…RVSVSLPQRY (189 aa)) constitute a Histidine kinase domain. His313 bears the Phosphohistidine; by autocatalysis mark.

Post-translationally, autophosphorylated.

Its subcellular location is the cell inner membrane. The enzyme catalyses ATP + protein L-histidine = ADP + protein N-phospho-L-histidine.. Part of the UhpABC signaling cascade that controls the expression of the hexose phosphate transporter UhpT. UhpB functions as a membrane-associated protein kinase that autophosphorylates in response to interaction with UhpC, and subsequently transfers its phosphate group to the response regulator UhpA. Can also dephosphorylate UhpA. This Salmonella typhimurium (strain LT2 / SGSC1412 / ATCC 700720) protein is Signal transduction histidine-protein kinase/phosphatase UhpB (uhpB).